Reading from the N-terminus, the 346-residue chain is Selenoprotein V (346 aa).

Disordered stretches follow at residues 1 to 40 (MNNQ…VRTR) and 151 to 206 (LDPP…PGPT). The segment covering 151-162 (LDPPPEPAPELP) has biased composition (pro residues). The segment at residues 270–273 (CGLU) is a cross-link (cysteinyl-selenocysteine (Cys-Sec); redox-active). Position 273 (U273) is a non-standard amino acid, selenocysteine.

Belongs to the SelWTH family. Post-translationally, truncated SELENOV proteins produced by failed UGA/Sec decoding are ubiquitinated by the CRL2(APPBP2) complex, which recognizes the glycine (Gly) at the C-terminus of truncated SELENOV proteins. As to expression, testis specific.

In terms of biological role, may be involved in a redox-related process. In Homo sapiens (Human), this protein is Selenoprotein V.